We begin with the raw amino-acid sequence, 493 residues long: MYSRPSNYAPSKDVYGGEMRSQPAYSYYPEEEIQHFYRWSSPPGIIKIMSILIVVMCVGIFACVASTLPWDLDITGQSMGYGMGSGSYSGGYTGYGFGGSQMGLGFAYGGNYTDPRAAKGFILAMAAFCFIIGLVIFVMLVTRTPLSTSRKFYLIVIIVSAIIGGLVFIATIVYTVGVNPVAQASGSAFYTQIVSICNQFYSPVQTGVFVNQYLYHYCVVEPQEAIAIVLGFLIVVAFAIIIFFAVKTRKKINQYGKTNILWKKNHIYEDGDPQVEQWVKNVAENSAPALSDYNEKVDGSVADYRSANGVQAYPSQNNISHPIAEEELPLKEDYGMSPRHYSSSSDATTKKAPPKKRPGKPRRSDLDTNEGGYNTGGESADELEDDSWDSEYPPITQTKQRQEYKQEFASDLHEYKRLQAELDELSKIPVPSLNRELGQSSRKDSEEYRTVADKYNRLKEIKSSADYRNKKKRCKGLKTKLNHIKQMVSNYDK.

The Cytoplasmic segment spans residues 1–47; the sequence is MYSRPSNYAPSKDVYGGEMRSQPAYSYYPEEEIQHFYRWSSPPGIIK. The region spanning 41–250 is the MARVEL domain; that stretch reads SPPGIIKIMS…IIFFAVKTRK (210 aa). A helical membrane pass occupies residues 48-70; that stretch reads IMSILIVVMCVGIFACVASTLPW. The Extracellular portion of the chain corresponds to 71 to 116; it reads DLDITGQSMGYGMGSGSYSGGYTGYGFGGSQMGLGFAYGGNYTDPR. Residues 117–141 traverse the membrane as a helical segment; sequence AAKGFILAMAAFCFIIGLVIFVMLV. Over 142 to 151 the chain is Cytoplasmic; sequence TRTPLSTSRK. The chain crosses the membrane as a helical span at residues 152-176; sequence FYLIVIIVSAIIGGLVFIATIVYTV. The Extracellular portion of the chain corresponds to 177–224; it reads GVNPVAQASGSAFYTQIVSICNQFYSPVQTGVFVNQYLYHYCVVEPQE. Residues Cys-197 and Cys-218 are joined by a disulfide bond. A helical transmembrane segment spans residues 225 to 246; the sequence is AIAIVLGFLIVVAFAIIIFFAV. The Cytoplasmic segment spans residues 247-493; the sequence is KTRKKINQYG…IKQMVSNYDK (247 aa). Residues 334-407 are disordered; that stretch reads YGMSPRHYSS…TKQRQEYKQE (74 aa). Basic residues predominate over residues 352-361; the sequence is APPKKRPGKP. At Thr-375 the chain carries Phosphothreonine; by CK2; in vitro. Ser-379 carries the phosphoserine; by CK2; in vitro modification. Residues 379-389 show a composition bias toward acidic residues; that stretch reads SADELEDDSWD. An OCEL domain is found at 386–493; the sequence is DSWDSEYPPI…IKQMVSNYDK (108 aa). Residues 396–428 adopt a coiled-coil conformation; that stretch reads TQTKQRQEYKQEFASDLHEYKRLQAELDELSKI.

Belongs to the ELL/occludin family. As to quaternary structure, interacts in vitro with cingulin, possibly directly. Interacts with ZO-1. Post-translationally, phosphorylated. In terms of tissue distribution, localized at tight junctions of both epithelial and endothelial cells.

The protein resides in the cell membrane. It is found in the cell junction. Its subcellular location is the tight junction. Probably plays a role in the formation and regulation of the tight junction (TJ) paracellular permeability barrier. The protein is Occludin (ocln) of Xenopus laevis (African clawed frog).